The chain runs to 1026 residues: DNA cross-link repair 1A protein (1026 aa).

The tract at residues 1–189 is nuclear localization region; that stretch reads MLEDTWEEEI…RDSKEPLGSP (189 aa). Residues 12-110 are disordered; it reads EYKSKRKPKP…HRTRRGKQVT (99 aa). Residues 34–65 are compositionally biased toward basic and acidic residues; that stretch reads SVEKSTDGKHQSKGNEKRTSENPGKTKDHKVC. Low complexity predominate over residues 71–82; that stretch reads SQISAGSSQSSS. Positions 98 to 107 are enriched in basic residues; sequence KKQHRTRRGK. A UBZ4-type zinc finger spans residues 118–148; the sequence is DGYCPSCQMPFSSLLGQTPQWHVFECLDSPP. Cys-121, Cys-124, His-139, and Cys-143 together coordinate Zn(2+). Residues Lys-359, Lys-434, and Lys-522 each participate in a glycyl lysine isopeptide (Lys-Gly) (interchain with G-Cter in SUMO2) cross-link. The tract at residues 401–602 is nuclear focus formation; that stretch reads SQEDLPHTDA…SSLSDLEFDA (202 aa). Disordered stretches follow at residues 474–542, 560–590, and 602–651; these read PLEK…SKKV, ETSL…CKRK, and AKNL…PELG. Over residues 527–540 the composition is skewed to low complexity; sequence SPSSPKCSPSQPSK. Residues 569-581 show a composition bias toward polar residues; it reads EGPNVSPVVSPNQ. Ser-574 and Ser-578 each carry phosphoserine. The span at 619-628 shows a compositional bias: basic residues; it reads RQHRRKRHKT. Lys-657 is covalently cross-linked (Glycyl lysine isopeptide (Lys-Gly) (interchain with G-Cter in SUMO2)).

It belongs to the DNA repair metallo-beta-lactamase (DRMBL) family. In terms of assembly, binds constitutively to TP53BP1. Binds CDC27, which is itself a component of the anaphase promoting complex (APC). Binds PIAS1.

The protein resides in the nucleus. The catalysed reaction is a beta-lactam + H2O = a substituted beta-amino acid. Functionally, may be required for DNA interstrand cross-link repair. Also required for checkpoint mediated cell cycle arrest in early prophase in response to mitotic spindle poisons. In Mus musculus (Mouse), this protein is DNA cross-link repair 1A protein (Dclre1a).